Reading from the N-terminus, the 199-residue chain is NAD(P)H dehydrogenase (quinone) (199 aa).

Residues 4-190 (VLVLYYSAYG…AGARYQGKTI (187 aa)) enclose the Flavodoxin-like domain. Residues 10–15 (SAYGHI) and 78–80 (TRF) contribute to the FMN site. Tyr-12 is a binding site for NAD(+). Trp-98 serves as a coordination point for substrate. Residues 113–119 (STATQHG) and His-134 each bind FMN.

Belongs to the WrbA family. It depends on FMN as a cofactor.

It carries out the reaction a quinone + NADH + H(+) = a quinol + NAD(+). The catalysed reaction is a quinone + NADPH + H(+) = a quinol + NADP(+). This Rhodopseudomonas palustris (strain HaA2) protein is NAD(P)H dehydrogenase (quinone).